We begin with the raw amino-acid sequence, 447 residues long: Alkylglycerol monooxygenase (447 aa).

The next 2 helical transmembrane spans lie at 43 to 63 (ATPF…ILKG) and 111 to 131 (WDST…YYWF). Positions 119 to 249 (FTFLGVDFGY…LIIWDRIFGT (131 aa)) constitute a Fatty acid hydroxylase domain. The Histidine box-1 motif lies at 132–136 (HRMAH). The Histidine box-2 motif lies at 145–149 (HQAHH). Residues 170–190 (SWVFYCPLALFIPPSVFAVHI) form a helical membrane-spanning segment. Residues 221–225 (HRVHH) carry the Histidine box-3 motif. 3 consecutive transmembrane segments (helical) span residues 340–360 (VLQF…TAVL), 363–383 (VTLL…GFLL), and 413–433 (IPSL…FWGV).

This sequence belongs to the sterol desaturase family. TMEM195 subfamily. Fe cation serves as cofactor. In terms of tissue distribution, highly expressed in lever and small intestine.

Its subcellular location is the endoplasmic reticulum membrane. The catalysed reaction is 1-O-(1,2-saturated-alkyl)-sn-glycerol + (6R)-L-erythro-5,6,7,8-tetrahydrobiopterin + O2 = a 1-(1-hydroxyalkyl)-sn-glycerol + (6R)-L-erythro-6,7-dihydrobiopterin + H2O. Its function is as follows. Glyceryl-ether monooxygenase that cleaves the O-alkyl bond of ether lipids. Ether lipids are essential components of brain membranes. The polypeptide is Alkylglycerol monooxygenase (Agmo) (Mus musculus (Mouse)).